A 457-amino-acid polypeptide reads, in one-letter code: Bifunctional F420 biosynthesis protein FbiB (457 aa).

The tract at residues 1–253 (MTSSDSHRSA…NGPDDLFWLG (253 aa)) is coenzyme F420:L-glutamate ligase. GTP contacts are provided by residues 29-32 (LPEF), Ser-59, and Lys-64. Residue Asp-118 participates in a divalent metal cation binding. Asn-121 contributes to the GTP binding site. Asp-159 and Thr-160 together coordinate a divalent metal cation. Residues 254-457 (TTEALELGRQ…VRVADLLLRK (204 aa)) form a dehydro-coenzyme F420-0 reductase region. FMN-binding positions include 269–273 (RRSVR) and Ala-297. Residue Asp-329 participates in coenzyme F420-(gamma-Glu)n binding. FMN contacts are provided by Gly-408 and Arg-445.

It in the N-terminal section; belongs to the CofE family. Mg(2+) serves as cofactor. Mn(2+) is required as a cofactor. It depends on K(+) as a cofactor.

It carries out the reaction oxidized coenzyme F420-0 + GTP + L-glutamate = oxidized coenzyme F420-1 + GDP + phosphate + H(+). The catalysed reaction is oxidized coenzyme F420-1 + GTP + L-glutamate = oxidized coenzyme F420-2 + GDP + phosphate + H(+). The enzyme catalyses oxidized coenzyme F420-(gamma-L-Glu)(n) + GTP + L-glutamate = oxidized coenzyme F420-(gamma-L-Glu)(n+1) + GDP + phosphate + H(+). It catalyses the reaction oxidized coenzyme F420-0 + FMN + H(+) = dehydro coenzyme F420-0 + FMNH2. Its pathway is cofactor biosynthesis; coenzyme F420 biosynthesis. Its function is as follows. Bifunctional enzyme that catalyzes the GTP-dependent successive addition of multiple gamma-linked L-glutamates to the L-lactyl phosphodiester of 7,8-didemethyl-8-hydroxy-5-deazariboflavin (F420-0) to form polyglutamated F420 derivatives, and the FMNH2-dependent reduction of dehydro-F420-0 to form F420-0. The protein is Bifunctional F420 biosynthesis protein FbiB of Mycobacterium leprae (strain TN).